We begin with the raw amino-acid sequence, 103 residues long: UPF0145 protein pXO2-45/BXB0052/GBAA_pXO2_0052 (103 aa).

This sequence belongs to the UPF0145 family.

This chain is UPF0145 protein pXO2-45/BXB0052/GBAA_pXO2_0052, found in Bacillus anthracis.